Consider the following 199-residue polypeptide: Large ribosomal subunit protein bL25 (199 aa).

The protein belongs to the bacterial ribosomal protein bL25 family. CTC subfamily. Part of the 50S ribosomal subunit; part of the 5S rRNA/L5/L18/L25 subcomplex. Contacts the 5S rRNA. Binds to the 5S rRNA independently of L5 and L18.

Functionally, this is one of the proteins that binds to the 5S RNA in the ribosome where it forms part of the central protuberance. This Syntrophobacter fumaroxidans (strain DSM 10017 / MPOB) protein is Large ribosomal subunit protein bL25.